A 549-amino-acid polypeptide reads, in one-letter code: Undecaprenyl phosphate-alpha-4-amino-4-deoxy-L-arabinose arabinosyl transferase (549 aa).

12 helical membrane passes run 9 to 29 (LLLI…GLWI), 80 to 100 (LFGV…LAYL), 112 to 132 (SLAC…SGYA), 136 to 156 (PQFT…LDAG), 166 to 186 (ILLG…AWLL), 204 to 224 (LLGY…PWAL), 256 to 276 (PWWF…GLLP), 288 to 308 (QAPV…FSLS), 312 to 332 (LPTY…HALV), 346 to 366 (NGLL…YLQL), 376 to 396 (FELF…LAQW), and 402 to 422 (AWAA…AAMP).

Belongs to the glycosyltransferase 83 family.

The protein resides in the cell inner membrane. It carries out the reaction 4-amino-4-deoxy-alpha-L-arabinopyranosyl di-trans,octa-cis-undecaprenyl phosphate + lipid IVA = lipid IIA + di-trans,octa-cis-undecaprenyl phosphate.. It participates in lipopolysaccharide metabolism; 4-amino-4-deoxy-beta-L-arabinose-lipid A biosynthesis. Catalyzes the transfer of the L-Ara4N moiety of the glycolipid undecaprenyl phosphate-alpha-L-Ara4N to lipid A. The modified arabinose is attached to lipid A and is required for resistance to polymyxin and cationic antimicrobial peptides. This chain is Undecaprenyl phosphate-alpha-4-amino-4-deoxy-L-arabinose arabinosyl transferase, found in Pseudomonas aeruginosa (strain UCBPP-PA14).